A 480-amino-acid polypeptide reads, in one-letter code: tRNA (uracil-5-)-methyltransferase homolog B (480 aa).

Gln299, Glu349, and Asn399 together coordinate S-adenosyl-L-methionine. Cys427 functions as the Nucleophile in the catalytic mechanism. Glu473 acts as the Proton acceptor in catalysis.

Belongs to the class I-like SAM-binding methyltransferase superfamily. RNA M5U methyltransferase family.

It is found in the mitochondrion. It carries out the reaction uridine(54) in tRNA + S-adenosyl-L-methionine = 5-methyluridine(54) in tRNA + S-adenosyl-L-homocysteine + H(+). The enzyme catalyses a uridine in 12S rRNA + S-adenosyl-L-methionine = a 5-methyluridine in 12S rRNA + S-adenosyl-L-homocysteine + H(+). Mitochondrial S-adenosyl-L-methionine-dependent methyltransferase that catalyzes the formation of 5-methyl-uridine in tRNAs and 12S rRNA. Catalyzes the methylation of uridine at position 54 (m5U54) in all tRNAs. Specifically methylates the uridine in position 429 of 12S rRNA (m5U429). Does not affect RNA stability or mitochondrial translation. In Danio rerio (Zebrafish), this protein is tRNA (uracil-5-)-methyltransferase homolog B (trmt2b).